We begin with the raw amino-acid sequence, 157 residues long: SsrA-binding protein (157 aa).

Residues 133–157 (HDKRNSIKEREGKREVERALKSRSR) are disordered.

It belongs to the SmpB family.

The protein resides in the cytoplasm. Its function is as follows. Required for rescue of stalled ribosomes mediated by trans-translation. Binds to transfer-messenger RNA (tmRNA), required for stable association of tmRNA with ribosomes. tmRNA and SmpB together mimic tRNA shape, replacing the anticodon stem-loop with SmpB. tmRNA is encoded by the ssrA gene; the 2 termini fold to resemble tRNA(Ala) and it encodes a 'tag peptide', a short internal open reading frame. During trans-translation Ala-aminoacylated tmRNA acts like a tRNA, entering the A-site of stalled ribosomes, displacing the stalled mRNA. The ribosome then switches to translate the ORF on the tmRNA; the nascent peptide is terminated with the 'tag peptide' encoded by the tmRNA and targeted for degradation. The ribosome is freed to recommence translation, which seems to be the essential function of trans-translation. The protein is SsrA-binding protein of Verminephrobacter eiseniae (strain EF01-2).